Consider the following 139-residue polypeptide: Plasmid stability protein StbB (139 aa).

The PINc domain maps to 2-136 (ILLDTNVISE…EAAGLNVINP (135 aa)). D5 and D104 together coordinate Mg(2+).

The protein belongs to the PINc/VapC protein family. It depends on Mg(2+) as a cofactor.

Toxic component of a type II toxin-antitoxin (TA) system. An RNase. Involved in plasmid stability. The polypeptide is Plasmid stability protein StbB (stbB) (Pseudomonas syringae pv. tomato (strain ATCC BAA-871 / DC3000)).